We begin with the raw amino-acid sequence, 357 residues long: 3-dehydroquinate synthase (357 aa).

Residues 126-127, K139, and K148 contribute to the NAD(+) site; that span reads TT. Zn(2+) is bound by residues E181, H244, and H261.

The protein belongs to the sugar phosphate cyclases superfamily. Dehydroquinate synthase family. Co(2+) is required as a cofactor. It depends on Zn(2+) as a cofactor. Requires NAD(+) as cofactor.

The protein localises to the cytoplasm. It carries out the reaction 7-phospho-2-dehydro-3-deoxy-D-arabino-heptonate = 3-dehydroquinate + phosphate. It participates in metabolic intermediate biosynthesis; chorismate biosynthesis; chorismate from D-erythrose 4-phosphate and phosphoenolpyruvate: step 2/7. In terms of biological role, catalyzes the conversion of 3-deoxy-D-arabino-heptulosonate 7-phosphate (DAHP) to dehydroquinate (DHQ). The sequence is that of 3-dehydroquinate synthase from Solibacter usitatus (strain Ellin6076).